The following is a 517-amino-acid chain: MSSLTNPTTVMEEEEVPVAAPIRRGNKNPRRYSLVHQASCETQHHIGIRRQNTIQHRKQLTDQMREQKILQQLNDEGVEVIFAANDVSSIDFSVIVTSTDYISTFVSDILYNMKSAGVQICHVETRESKAVSGHDVLLDCRATKNQLIKAAELLTQNHVALTHFSIFSKKSVEKSQSMIWFPRHISELDQCSKCITKYEPTTDPRHPGHGDDEYIARRKFLNDQALEFKFGDEIGYVEYTEDEHATWKAVYEKLGGLHESHTCSVYRQNLKILQKEKVLTADRIPQIRDVNKFLQKKTGFELRPCSGLLSARDFLASLAFRVFQTTTYLRHHKSPHHSPEPDLIHELLGHVPMFSDPLLAQMSQDIGLMSLGASDEHIEKLATVYWFIVEFGLCKEDGKLKAIGAGLLSAYGELIHACSDAPEHKDFDPAVTAIQKYEDDDYQPLYFVADSIHDALAKLRKYASSMDRPFSVVYDPFTKSIETIQSSADLEKAFSRLSNDLSAITHAADRMKISITA.

Ser33 carries the phosphoserine; by PKA modification. His345, His350, and Glu390 together coordinate Fe cation.

This sequence belongs to the biopterin-dependent aromatic amino acid hydroxylase family. It depends on Fe(2+) as a cofactor.

Its subcellular location is the cytoplasm. The protein localises to the perinuclear region. It is found in the cell projection. The protein resides in the axon. It carries out the reaction (6R)-L-erythro-5,6,7,8-tetrahydrobiopterin + L-tyrosine + O2 = (4aS,6R)-4a-hydroxy-L-erythro-5,6,7,8-tetrahydrobiopterin + L-dopa. It functions in the pathway catecholamine biosynthesis; dopamine biosynthesis; dopamine from L-tyrosine: step 1/2. With respect to regulation, phosphorylation leads to an increase in the catalytic activity. Its function is as follows. Involved in the synthesis of catecholamines, such as dopamine. Has a role in serotonin signaling. Required for normal explorative and foraging behavior. The sequence is that of Tyrosine 3-monooxygenase (cat-2) from Caenorhabditis briggsae.